Consider the following 211-residue polypeptide: Thiamine-phosphate synthase (211 aa).

4-amino-2-methyl-5-(diphosphooxymethyl)pyrimidine is bound by residues 37 to 41 (QLRIK) and Asn69. Residues Asp70 and Asp89 each contribute to the Mg(2+) site. Position 108 (Ser108) interacts with 4-amino-2-methyl-5-(diphosphooxymethyl)pyrimidine. Position 134-136 (134-136 (TQT)) interacts with 2-[(2R,5Z)-2-carboxy-4-methylthiazol-5(2H)-ylidene]ethyl phosphate. Lys137 serves as a coordination point for 4-amino-2-methyl-5-(diphosphooxymethyl)pyrimidine. 2-[(2R,5Z)-2-carboxy-4-methylthiazol-5(2H)-ylidene]ethyl phosphate contacts are provided by residues Gly166 and 186–187 (VS).

Belongs to the thiamine-phosphate synthase family. Mg(2+) is required as a cofactor.

It carries out the reaction 2-[(2R,5Z)-2-carboxy-4-methylthiazol-5(2H)-ylidene]ethyl phosphate + 4-amino-2-methyl-5-(diphosphooxymethyl)pyrimidine + 2 H(+) = thiamine phosphate + CO2 + diphosphate. The enzyme catalyses 2-(2-carboxy-4-methylthiazol-5-yl)ethyl phosphate + 4-amino-2-methyl-5-(diphosphooxymethyl)pyrimidine + 2 H(+) = thiamine phosphate + CO2 + diphosphate. It catalyses the reaction 4-methyl-5-(2-phosphooxyethyl)-thiazole + 4-amino-2-methyl-5-(diphosphooxymethyl)pyrimidine + H(+) = thiamine phosphate + diphosphate. It functions in the pathway cofactor biosynthesis; thiamine diphosphate biosynthesis; thiamine phosphate from 4-amino-2-methyl-5-diphosphomethylpyrimidine and 4-methyl-5-(2-phosphoethyl)-thiazole: step 1/1. Functionally, condenses 4-methyl-5-(beta-hydroxyethyl)thiazole monophosphate (THZ-P) and 2-methyl-4-amino-5-hydroxymethyl pyrimidine pyrophosphate (HMP-PP) to form thiamine monophosphate (TMP). This chain is Thiamine-phosphate synthase, found in Escherichia coli O6:H1 (strain CFT073 / ATCC 700928 / UPEC).